A 239-amino-acid chain; its full sequence is MGRKWNNIKDKKASKDANTSRIYAKFGREIYVAAKQGEPDPESNQALKVVLERAKTYSVPKSIIDRAIEKAKGGSEENYDELRYEGFGPNGSMIIVDTLTNNVNRTAADVRAAFNKNGGNMGVNGSVAYMFDATAVIGLEGKTADEVLEILMEADVDARDILEEEDSVIIYAEPDQFHAVQEALKAAGTTEFTVAELTMLAQNDVELSEEAQAQFEKLIDALEDLDDVQQVYHNVDLGE.

This sequence belongs to the TACO1 family. YeeN subfamily.

Its subcellular location is the cytoplasm. The chain is Probable transcriptional regulatory protein Bcer98_0465 from Bacillus cytotoxicus (strain DSM 22905 / CIP 110041 / 391-98 / NVH 391-98).